A 254-amino-acid chain; its full sequence is Large ribosomal subunit protein uL2 (254 aa).

It belongs to the universal ribosomal protein uL2 family.

The chain is Large ribosomal subunit protein uL2 (RPL2) from Eremothecium gossypii (strain ATCC 10895 / CBS 109.51 / FGSC 9923 / NRRL Y-1056) (Yeast).